The chain runs to 328 residues: Beta-ketoacyl-[acyl-carrier-protein] synthase III 2 (328 aa).

Active-site residues include Cys113 and His255. The interval 256–260 (QANAR) is ACP-binding. The active site involves Asn285.

Belongs to the thiolase-like superfamily. FabH family. In terms of assembly, homodimer.

The protein resides in the cytoplasm. The catalysed reaction is malonyl-[ACP] + acetyl-CoA + H(+) = 3-oxobutanoyl-[ACP] + CO2 + CoA. Its pathway is lipid metabolism; fatty acid biosynthesis. Its function is as follows. Catalyzes the condensation reaction of fatty acid synthesis by the addition to an acyl acceptor of two carbons from malonyl-ACP. Catalyzes the first condensation reaction which initiates fatty acid synthesis and may therefore play a role in governing the total rate of fatty acid production. Possesses both acetoacetyl-ACP synthase and acetyl transacylase activities. Its substrate specificity determines the biosynthesis of branched-chain and/or straight-chain of fatty acids. The chain is Beta-ketoacyl-[acyl-carrier-protein] synthase III 2 from Lactiplantibacillus plantarum (strain ATCC BAA-793 / NCIMB 8826 / WCFS1) (Lactobacillus plantarum).